The following is a 75-amino-acid chain: Large ribosomal subunit protein bL31 (75 aa).

This sequence belongs to the bacterial ribosomal protein bL31 family. Type A subfamily. In terms of assembly, part of the 50S ribosomal subunit.

Its function is as follows. Binds the 23S rRNA. The chain is Large ribosomal subunit protein bL31 from Zymomonas mobilis subsp. mobilis (strain ATCC 31821 / ZM4 / CP4).